Here is a 308-residue protein sequence, read N- to C-terminus: Ornithine carbamoyltransferase (308 aa).

Carbamoyl phosphate is bound by residues 57 to 60, glutamine 84, arginine 108, and 135 to 138; these read STRT and HPCQ. L-ornithine contacts are provided by residues asparagine 166, aspartate 224, and 228–229; that span reads SM. Residues 264–265 and arginine 292 contribute to the carbamoyl phosphate site; that span reads CL.

The protein belongs to the aspartate/ornithine carbamoyltransferase superfamily. OTCase family.

The protein resides in the cytoplasm. It carries out the reaction carbamoyl phosphate + L-ornithine = L-citrulline + phosphate + H(+). It participates in amino-acid degradation; L-arginine degradation via ADI pathway; carbamoyl phosphate from L-arginine: step 2/2. Reversibly catalyzes the transfer of the carbamoyl group from carbamoyl phosphate (CP) to the N(epsilon) atom of ornithine (ORN) to produce L-citrulline. The protein is Ornithine carbamoyltransferase of Ralstonia pickettii (strain 12J).